The sequence spans 647 residues: tRNA 5-methylaminomethyl-2-thiouridine biosynthesis bifunctional protein MnmC (647 aa).

Residues 1–227 form a tRNA (mnm(5)s(2)U34)-methyltransferase region; it reads MLTWKNNLTP…KREMLIGSYS (227 aa). Positions 256-647 are FAD-dependent cmnm(5)s(2)U34 oxidoreductase; the sequence is VGAGIAGTTL…ARFLYRKVRK (392 aa).

This sequence in the N-terminal section; belongs to the methyltransferase superfamily. tRNA (mnm(5)s(2)U34)-methyltransferase family. It in the C-terminal section; belongs to the DAO family. It depends on FAD as a cofactor.

It localises to the cytoplasm. The catalysed reaction is 5-aminomethyl-2-thiouridine(34) in tRNA + S-adenosyl-L-methionine = 5-methylaminomethyl-2-thiouridine(34) in tRNA + S-adenosyl-L-homocysteine + H(+). Its function is as follows. Catalyzes the last two steps in the biosynthesis of 5-methylaminomethyl-2-thiouridine (mnm(5)s(2)U) at the wobble position (U34) in tRNA. Catalyzes the FAD-dependent demodification of cmnm(5)s(2)U34 to nm(5)s(2)U34, followed by the transfer of a methyl group from S-adenosyl-L-methionine to nm(5)s(2)U34, to form mnm(5)s(2)U34. The polypeptide is tRNA 5-methylaminomethyl-2-thiouridine biosynthesis bifunctional protein MnmC (Leptospira interrogans serogroup Icterohaemorrhagiae serovar Lai (strain 56601)).